Consider the following 146-residue polypeptide: Peptidyl-lysine N-acetyltransferase YiaC (146 aa).

In terms of domain architecture, N-acetyltransferase spans 1–143; that stretch reads MIREAQRSEL…PTWIMSWPVV (143 aa).

The protein belongs to the acetyltransferase family.

It catalyses the reaction L-lysyl-[protein] + acetyl-CoA = N(6)-acetyl-L-lysyl-[protein] + CoA + H(+). Functionally, N-epsilon-lysine acetyltransferase that catalyzes acetylation of a large number of proteins. Overexpression inhibits motility. The protein is Peptidyl-lysine N-acetyltransferase YiaC (yiaC) of Escherichia coli (strain K12).